Reading from the N-terminus, the 199-residue chain is MIIHNLGIKDYTEIWEQMKAFTAIRDSNSCDELWLLEHYPVYTQGQAGKPEHVLNPNSIKIVQSDRGGQVTYHGPGQLVAYVLMDIRRRNLGIRTLVAKLEEILISVLKHYKIPANIRSGAPGVYVGEKKIASIGLRVKNGCTYHGIALNVNMDLSPFLGINPCGFAKMEMTQMSHFHPNIQLEEVSQHFVQYFLTQFK.

A BPL/LPL catalytic domain is found at 27–199 (SNSCDELWLL…FVQYFLTQFK (173 aa)). Substrate is bound by residues 66–73 (RGGQVTYH), 133–135 (SIG), and 146–148 (GIA). Cysteine 164 serves as the catalytic Acyl-thioester intermediate.

Belongs to the LipB family.

The protein resides in the cytoplasm. The enzyme catalyses octanoyl-[ACP] + L-lysyl-[protein] = N(6)-octanoyl-L-lysyl-[protein] + holo-[ACP] + H(+). The protein operates within protein modification; protein lipoylation via endogenous pathway; protein N(6)-(lipoyl)lysine from octanoyl-[acyl-carrier-protein]: step 1/2. Its function is as follows. Catalyzes the transfer of endogenously produced octanoic acid from octanoyl-acyl-carrier-protein onto the lipoyl domains of lipoate-dependent enzymes. Lipoyl-ACP can also act as a substrate although octanoyl-ACP is likely to be the physiological substrate. The chain is Octanoyltransferase from Legionella pneumophila (strain Corby).